The sequence spans 191 residues: Small ribosomal subunit protein uS5 (191 aa).

Residues 21-84 (FADRLVAINR…EQAKRQMIRV (64 aa)) enclose the S5 DRBM domain. The interval 155–191 (LRKESSPRSVAQRRGKKVADILPKVDAAPAPAETAEA) is disordered. Low complexity predominate over residues 181–191 (AAPAPAETAEA).

It belongs to the universal ribosomal protein uS5 family. Part of the 30S ribosomal subunit. Contacts proteins S4 and S8.

In terms of biological role, with S4 and S12 plays an important role in translational accuracy. Its function is as follows. Located at the back of the 30S subunit body where it stabilizes the conformation of the head with respect to the body. The protein is Small ribosomal subunit protein uS5 of Roseobacter denitrificans (strain ATCC 33942 / OCh 114) (Erythrobacter sp. (strain OCh 114)).